The sequence spans 87 residues: uncharacterized protein (87 aa).

The N-terminal stretch at 1–23 is a signal peptide; it reads MAVSVLRLTVVLGLLVLFLTCYA. The interval 24-44 is disordered; that stretch reads DDKPDKPDDKPDDSGKDPKPD.

It localises to the secreted. This is an uncharacterized protein from Homo sapiens (Human).